The following is a 621-amino-acid chain: 1-deoxy-D-xylulose-5-phosphate synthase (621 aa).

Thiamine diphosphate-binding positions include His-80 and 121 to 123; that span reads GHS. Position 152 (Asp-152) interacts with Mg(2+). Residues 153 to 154, Asn-181, Tyr-288, and Glu-370 contribute to the thiamine diphosphate site; that span reads GA. Asn-181 contacts Mg(2+).

Belongs to the transketolase family. DXPS subfamily. Homodimer. Requires Mg(2+) as cofactor. It depends on thiamine diphosphate as a cofactor.

It carries out the reaction D-glyceraldehyde 3-phosphate + pyruvate + H(+) = 1-deoxy-D-xylulose 5-phosphate + CO2. The protein operates within metabolic intermediate biosynthesis; 1-deoxy-D-xylulose 5-phosphate biosynthesis; 1-deoxy-D-xylulose 5-phosphate from D-glyceraldehyde 3-phosphate and pyruvate: step 1/1. In terms of biological role, catalyzes the acyloin condensation reaction between C atoms 2 and 3 of pyruvate and glyceraldehyde 3-phosphate to yield 1-deoxy-D-xylulose-5-phosphate (DXP). This Serratia proteamaculans (strain 568) protein is 1-deoxy-D-xylulose-5-phosphate synthase.